The sequence spans 130 residues: Early 3 receptor internalization and degradation beta protein (130 aa).

The N-terminal stretch at 1–19 (MKRSVIFVLLIFCALPVLC) is a signal peptide. Residues 53–77 (AWLYAIISVMVFCSTIFALAIYPYL) form a helical membrane-spanning segment. The interval 122–125 (YFNL) is tyrosine-based sorting motif.

Belongs to the adenoviridae E3_RID-beta family. As to quaternary structure, interacts with E3 RID-alpha and E3 CR1-alpha. Phosphorylated on serine. Post-translationally, O-glycosylated, but not N-glycosylated.

Its subcellular location is the host membrane. In terms of biological role, prevents infected cell apoptosis induced by the host immune system. Acts by down-regulating a number of cell surface receptors in the tumor necrosis factor (TNF) receptor superfamily, namely FAS, TNFRSF10A/TRAIL receptor 1, and TNFRSF10B/TRAIL receptor 2. Down-regulation of these death receptors protects adenovirus-infected cells from apoptosis induced by the death receptor ligands Fas ligand and TRAIL. RID complex also down-regulates certain tyrosine kinase cell surface receptors, especially the epidermal growth factor receptor (EGFR). RID-mediated Fas and EGFR down-regulation occurs via endocytosis of the receptors into endosomes followed by transport to and degradation within lysosomes. This is Early 3 receptor internalization and degradation beta protein from Human adenovirus C serotype 2 (HAdV-2).